Consider the following 433-residue polypeptide: Transcriptional enhancer factor TEF-5 (433 aa).

Residues 1–12 (MASNSWNASSSP) are compositionally biased toward polar residues. Positions 1–35 (MASNSWNASSSPGEGREDGQDGMDKSLDNDAEGVW) are disordered. Positions 14–28 (EGREDGQDGMDKSLD) are enriched in basic and acidic residues. A DNA-binding region (TEA) is located at residues 28–104 (DNDAEGVWSP…QVLARREISG (77 aa)). The tract at residues 171–433 (GPSQDIKPFA…QHHVYKLVKD (263 aa)) is transcriptional activation.

In terms of tissue distribution, high levels in cardiac muscle, low in skeletal muscle. Intermediate levels in gizzard and lung, low levels in kidney.

The protein localises to the nucleus. Functionally, transcription factor which plays a key role in the Hippo signaling pathway, a pathway involved in organ size control and tumor suppression by restricting proliferation and promoting apoptosis. The core of this pathway is composed of a kinase cascade wherein MST1/MST2, in complex with its regulatory protein SAV1, phosphorylates and activates LATS1/2 in complex with its regulatory protein MOB1, which in turn phosphorylates and inactivates YAP1 oncoprotein and WWTR1/TAZ. The chain is Transcriptional enhancer factor TEF-5 (TEAD3) from Gallus gallus (Chicken).